The primary structure comprises 470 residues: ATP synthase subunit beta (470 aa).

158–165 (GGAGVGKT) contacts ATP.

Belongs to the ATPase alpha/beta chains family. In terms of assembly, F-type ATPases have 2 components, CF(1) - the catalytic core - and CF(0) - the membrane proton channel. CF(1) has five subunits: alpha(3), beta(3), gamma(1), delta(1), epsilon(1). CF(0) has three main subunits: a(1), b(2) and c(9-12). The alpha and beta chains form an alternating ring which encloses part of the gamma chain. CF(1) is attached to CF(0) by a central stalk formed by the gamma and epsilon chains, while a peripheral stalk is formed by the delta and b chains.

It is found in the cell membrane. It catalyses the reaction ATP + H2O + 4 H(+)(in) = ADP + phosphate + 5 H(+)(out). Its function is as follows. Produces ATP from ADP in the presence of a proton gradient across the membrane. The catalytic sites are hosted primarily by the beta subunits. The polypeptide is ATP synthase subunit beta (Alkalihalophilus pseudofirmus (strain ATCC BAA-2126 / JCM 17055 / OF4) (Bacillus pseudofirmus)).